We begin with the raw amino-acid sequence, 446 residues long: Adenylosuccinate synthetase (446 aa).

Residues 12-18 and 40-42 contribute to the GTP site; these read GDEGKGK and GHT. D13 functions as the Proton acceptor in the catalytic mechanism. D13 and G40 together coordinate Mg(2+). Residues 13 to 16, 38 to 41, T128, R142, Q223, T238, and R302 contribute to the IMP site; these read DEGK and NAGH. Residue H41 is the Proton donor of the active site. A substrate-binding site is contributed by 298–304; that stretch reads TTTGRRR. GTP contacts are provided by residues R304, 330-332, and 412-414; these read KLD and SLG.

Belongs to the adenylosuccinate synthetase family. Homodimer. Requires Mg(2+) as cofactor.

The protein resides in the cytoplasm. It catalyses the reaction IMP + L-aspartate + GTP = N(6)-(1,2-dicarboxyethyl)-AMP + GDP + phosphate + 2 H(+). The protein operates within purine metabolism; AMP biosynthesis via de novo pathway; AMP from IMP: step 1/2. Its function is as follows. Plays an important role in the de novo pathway of purine nucleotide biosynthesis. Catalyzes the first committed step in the biosynthesis of AMP from IMP. The protein is Adenylosuccinate synthetase of Acaryochloris marina (strain MBIC 11017).